We begin with the raw amino-acid sequence, 152 residues long: Deoxyuridine 5'-triphosphate nucleotidohydrolase (152 aa).

Residues 70–72, N83, 87–89, and M97 contribute to the substrate site; these read RSG and LID.

This sequence belongs to the dUTPase family. Mg(2+) serves as cofactor.

The enzyme catalyses dUTP + H2O = dUMP + diphosphate + H(+). Its pathway is pyrimidine metabolism; dUMP biosynthesis; dUMP from dCTP (dUTP route): step 2/2. Functionally, this enzyme is involved in nucleotide metabolism: it produces dUMP, the immediate precursor of thymidine nucleotides and it decreases the intracellular concentration of dUTP so that uracil cannot be incorporated into DNA. The chain is Deoxyuridine 5'-triphosphate nucleotidohydrolase from Buchnera aphidicola subsp. Baizongia pistaciae (strain Bp).